The sequence spans 290 residues: Syntaxin-2 (290 aa).

Residues 1-266 lie on the Cytoplasmic side of the membrane; that stretch reads MRDRLPDLTA…KYQSKARRKK (266 aa). At S14 the chain carries Phosphoserine. Residues 69 to 106 are a coiled coil; it reads EGKIKEELEDLNKEIKKTANRIRGKLKAIEQSCDQDEN. Residues 193 to 255 form the t-SNARE coiled-coil homology domain; sequence LNEIESRHKD…EHAKEETKKA (63 aa). The chain crosses the membrane as a helical; Anchor for type IV membrane protein span at residues 267-290; sequence WIIAAVVVAVIAVLALIIGLTVGK.

This sequence belongs to the syntaxin family. In terms of assembly, interacts with SYT6 and SYT8; the interaction is Ca(2+)-dependent. In terms of tissue distribution, heart, spleen, liver, and testis.

The protein resides in the membrane. In terms of biological role, essential for epithelial morphogenesis. May mediate Ca(2+)-regulation of exocytosis acrosomal reaction in sperm. This Rattus norvegicus (Rat) protein is Syntaxin-2 (Stx2).